The following is a 304-amino-acid chain: tRNA pseudouridine synthase B (304 aa).

The active-site Nucleophile is Asp38.

The protein belongs to the pseudouridine synthase TruB family. Type 1 subfamily.

The enzyme catalyses uridine(55) in tRNA = pseudouridine(55) in tRNA. Functionally, responsible for synthesis of pseudouridine from uracil-55 in the psi GC loop of transfer RNAs. In Listeria welshimeri serovar 6b (strain ATCC 35897 / DSM 20650 / CCUG 15529 / CIP 8149 / NCTC 11857 / SLCC 5334 / V8), this protein is tRNA pseudouridine synthase B.